The sequence spans 200 residues: Phospholipase D (200 aa).

A signal peptide spans 1-25 (MKRKNNKFIEISIAFILGVALGIYG). Residues 142–169 (VPGIAHNKVIIIDRKKVITGSFNFTAAA) enclose the PLD phosphodiesterase domain. Active-site residues include His147, Lys149, and Asp154.

The protein belongs to the phospholipase D family. In terms of assembly, homodimer.

It localises to the secreted. It catalyses the reaction a 1,2-diacyl-sn-glycero-3-phosphocholine + H2O = a 1,2-diacyl-sn-glycero-3-phosphate + choline + H(+). Functionally, could be a virulence factor. The chain is Phospholipase D (pld) from Rickettsia felis (strain ATCC VR-1525 / URRWXCal2) (Rickettsia azadi).